A 299-amino-acid chain; its full sequence is Glycine--tRNA ligase alpha subunit (299 aa).

This sequence belongs to the class-II aminoacyl-tRNA synthetase family. As to quaternary structure, tetramer of two alpha and two beta subunits.

Its subcellular location is the cytoplasm. The catalysed reaction is tRNA(Gly) + glycine + ATP = glycyl-tRNA(Gly) + AMP + diphosphate. This chain is Glycine--tRNA ligase alpha subunit (glyQ), found in Synechocystis sp. (strain ATCC 27184 / PCC 6803 / Kazusa).